Consider the following 179-residue polypeptide: MRVLGIDPGSRHLGWGLLVRQGTRIEHVAHGVIDIDTSGTFAARLVEIDDELGKVIASHAPDAAAVESLFFAKDAQSAAKLGHARGVVLLRLARAGVPISEYPPALVKRTIVGRGAAEKAQVAQVMTAVLRLAAPPRPDAADALAIAMTHLSAAGFAAALAASGAPVPRRARPRRARLG.

Residues D7, E67, and D139 contribute to the active site. Mg(2+) contacts are provided by D7, E67, and D139.

Belongs to the RuvC family. In terms of assembly, homodimer which binds Holliday junction (HJ) DNA. The HJ becomes 2-fold symmetrical on binding to RuvC with unstacked arms; it has a different conformation from HJ DNA in complex with RuvA. In the full resolvosome a probable DNA-RuvA(4)-RuvB(12)-RuvC(2) complex forms which resolves the HJ. It depends on Mg(2+) as a cofactor.

It is found in the cytoplasm. It catalyses the reaction Endonucleolytic cleavage at a junction such as a reciprocal single-stranded crossover between two homologous DNA duplexes (Holliday junction).. The RuvA-RuvB-RuvC complex processes Holliday junction (HJ) DNA during genetic recombination and DNA repair. Endonuclease that resolves HJ intermediates. Cleaves cruciform DNA by making single-stranded nicks across the HJ at symmetrical positions within the homologous arms, yielding a 5'-phosphate and a 3'-hydroxyl group; requires a central core of homology in the junction. The consensus cleavage sequence is 5'-(A/T)TT(C/G)-3'. Cleavage occurs on the 3'-side of the TT dinucleotide at the point of strand exchange. HJ branch migration catalyzed by RuvA-RuvB allows RuvC to scan DNA until it finds its consensus sequence, where it cleaves and resolves the cruciform DNA. This Sorangium cellulosum (strain So ce56) (Polyangium cellulosum (strain So ce56)) protein is Crossover junction endodeoxyribonuclease RuvC.